A 162-amino-acid chain; its full sequence is MRISKPHLRSVSIQCYLCLLLNSHFLTEAGIHVFILGCFSAGLPKTEANWVNVISDLKKIEDLIQSMHIDATLYTESDVHPSCKVTAMKCFLLELQVISHESGDTDIHDTVENLIILANNILSSNGNITESGCKECEELEEKNIKEFLQSFVHIVQMFINAS.

A signal peptide spans 1–29 (MRISKPHLRSVSIQCYLCLLLNSHFLTEA). A propeptide spanning residues 30–48 (GIHVFILGCFSAGLPKTEA) is cleaved from the precursor. Disulfide bonds link C83–C133 and C90–C136. N127 carries an N-linked (GlcNAc...) asparagine glycan.

The protein belongs to the IL-15/IL-21 family.

It localises to the secreted. Functionally, cytokine that plays a major role in the development of inflammatory and protective immune responses to microbial invaders and parasites by modulating immune cells of both the innate and adaptive immune systems. Stimulates the proliferation of natural killer cells, T-cells and B-cells and promotes the secretion of several cytokines. In monocytes, induces the production of IL8 and monocyte chemotactic protein 1/CCL2, two chemokines that attract neutrophils and monocytes respectively to sites of infection. Unlike most cytokines, which are secreted in soluble form, IL15 is expressed in association with its high affinity IL15RA on the surface of IL15-producing cells and delivers signals to target cells that express IL2RB and IL2RG receptor subunits. Binding to its receptor triggers the phosphorylation of JAK1 and JAK3 and the recruitment and subsequent phosphorylation of signal transducer and activator of transcription-3/STAT3 and STAT5. In mast cells, induces the rapid tyrosine phosphorylation of STAT6 and thereby controls mast cell survival and release of cytokines such as IL4. The protein is Interleukin-15 (IL15) of Macaca thibetana (Pere David's macaque).